The sequence spans 121 residues: Large ribosomal subunit protein bL12 (121 aa).

Belongs to the bacterial ribosomal protein bL12 family. In terms of assembly, homodimer. Part of the ribosomal stalk of the 50S ribosomal subunit. Forms a multimeric L10(L12)X complex, where L10 forms an elongated spine to which 2 to 4 L12 dimers bind in a sequential fashion. Binds GTP-bound translation factors.

Its function is as follows. Forms part of the ribosomal stalk which helps the ribosome interact with GTP-bound translation factors. Is thus essential for accurate translation. This is Large ribosomal subunit protein bL12 from Pelagibacter ubique (strain HTCC1062).